The sequence spans 1013 residues: Mediator of RNA polymerase II transcription subunit 5 (1013 aa).

Belongs to the Mediator complex subunit 5 family. As to quaternary structure, component of the Mediator complex.

It is found in the nucleus. Its function is as follows. Component of the Mediator complex, a coactivator involved in the regulated transcription of nearly all RNA polymerase II-dependent genes. Mediator functions as a bridge to convey information from gene-specific regulatory proteins to the basal RNA polymerase II transcription machinery. Mediator is recruited to promoters by direct interactions with regulatory proteins and serves as a scaffold for the assembly of a functional preinitiation complex with RNA polymerase II and the general transcription factors. This is Mediator of RNA polymerase II transcription subunit 5 (NUT1) from Aspergillus oryzae (strain ATCC 42149 / RIB 40) (Yellow koji mold).